The chain runs to 376 residues: DNA replication and repair protein RecF (376 aa).

Residue 30-37 coordinates ATP; the sequence is GNNAQGKS.

This sequence belongs to the RecF family.

The protein resides in the cytoplasm. In terms of biological role, the RecF protein is involved in DNA metabolism; it is required for DNA replication and normal SOS inducibility. RecF binds preferentially to single-stranded, linear DNA. It also seems to bind ATP. The sequence is that of DNA replication and repair protein RecF from Trichormus variabilis (strain ATCC 29413 / PCC 7937) (Anabaena variabilis).